A 37-amino-acid polypeptide reads, in one-letter code: Cytochrome b6-f complex subunit 5 (37 aa).

The helical transmembrane segment at Phe5–Ala25 threads the bilayer.

Belongs to the PetG family. As to quaternary structure, the 4 large subunits of the cytochrome b6-f complex are cytochrome b6, subunit IV (17 kDa polypeptide, PetD), cytochrome f and the Rieske protein, while the 4 small subunits are PetG, PetL, PetM and PetN. The complex functions as a dimer.

The protein resides in the plastid. It localises to the chloroplast thylakoid membrane. Its function is as follows. Component of the cytochrome b6-f complex, which mediates electron transfer between photosystem II (PSII) and photosystem I (PSI), cyclic electron flow around PSI, and state transitions. PetG is required for either the stability or assembly of the cytochrome b6-f complex. The polypeptide is Cytochrome b6-f complex subunit 5 (Platanus occidentalis (Sycamore)).